Reading from the N-terminus, the 195-residue chain is UPF0314 protein RL4541 (195 aa).

4 consecutive transmembrane segments (helical) span residues 15–35 (FWFV…YMMG), 64–84 (WYTP…HLIL), 127–147 (GDSI…FFFA), and 150–170 (APVA…GYII).

It belongs to the UPF0314 family.

The protein resides in the cell membrane. This chain is UPF0314 protein RL4541, found in Rhizobium johnstonii (strain DSM 114642 / LMG 32736 / 3841) (Rhizobium leguminosarum bv. viciae).